The following is a 346-amino-acid chain: KH domain-containing, RNA-binding, signal transduction-associated protein 3 (346 aa).

The interval 1-160 is involved in homodimerization; it reads MEEKYLPELM…IKKFLIPDYN (160 aa). Lysine 4 participates in a covalent cross-link: Glycyl lysine isopeptide (Lys-Gly) (interchain with G-Cter in SUMO2). The KH domain occupies 61–127; the sequence is LIPVKQFPKF…AKYFHLNDDL (67 aa). Disordered stretches follow at residues 212–266 and 317–346; these read RPVA…QETY and GQEE…YGRY. The span at 253–262 shows a compositional bias: pro residues; sequence GYRPPPPPPT.

The protein belongs to the KHDRBS family. In terms of assembly, self-associates to form homooligomers; dimerization increases RNA affinity. Interacts with KHDRBS2/SLM-1. Interacts with KHDRBS1/SAM68; heterooligomer formation of KHDRBS family proteins may modulate RNA substrate specificity. Interacts with the splicing regulatory proteins SFRS9, SAFB and YTHDC1. Interacts with HNRPL, RBMX, p85 subunit of PI3-kinase, SERPINB5. Phosphorylated on tyrosine residues by PTK6. Highly expressed in testis and brain. In adult cerebellum expressed predominantly in internal granular layer interneurons and in hippocampus is exclusively expressed in CA neurons; expression is restricted to neuronal subpopulations largely non-overlapping with expression of KHDRBS2/SLM-1.

It localises to the nucleus. RNA-binding protein that plays a role in the regulation of alternative splicing and influences mRNA splice site selection and exon inclusion. Binds preferentially to the 5'-[AU]UAAA-3' motif in vitro. Binds optimally to RNA containing 5'-[AU]UAA-3' as a bipartite motif spaced by more than 15 nucleotides. Binds poly(A). RNA-binding abilities are down-regulated by tyrosine kinase PTK6. Involved in splice site selection of vascular endothelial growth factor. In vitro regulates CD44 alternative splicing by direct binding to purine-rich exonic enhancer. Can regulate alternative splicing of neurexins NRXN1-3 in the laminin G-like domain 6 containing the evolutionary conserved neurexin alternative spliced segment 4 (AS4) involved in neurexin selective targeting to postsynaptic partners such as neuroligins and LRRTM family members. High concentrations in forebrain structures block splicing inclusion of NRXN1-3 AS4 exons while low concentrations favor their inclusion. Targeted, cell-type specific splicing regulation of NRXN1 at AS4 is involved in neuronal glutamatergic synapse function and plasticity and is linked to behavioral aspects. Regulates expression of KHDRBS2/SLIM-1 in defined neuron populations in the hippocampus by modifying its alternative splicing resulting in a transcript predicted to undergo nonsense-mediated decay. Can bind FABP9 mRNA. May play a role as a negative regulator of cell growth. Inhibits cell proliferation. This is KH domain-containing, RNA-binding, signal transduction-associated protein 3 (Khdrbs3) from Mus musculus (Mouse).